Consider the following 569-residue polypeptide: Urease subunit alpha (569 aa).

A Urease domain is found at 131–569 (GGIDSHIHFI…LPLAQRYFLF (439 aa)). 3 residues coordinate Ni(2+): His-136, His-138, and Lys-219. Position 219 is an N6-carboxylysine (Lys-219). His-221 contributes to the substrate binding site. 2 residues coordinate Ni(2+): His-248 and His-274. The Proton donor role is filled by His-322. Asp-362 is a binding site for Ni(2+).

The protein belongs to the metallo-dependent hydrolases superfamily. Urease alpha subunit family. Heterotrimer of UreA (gamma), UreB (beta) and UreC (alpha) subunits. Three heterotrimers associate to form the active enzyme. Ni cation is required as a cofactor. Post-translationally, carboxylation allows a single lysine to coordinate two nickel ions.

Its subcellular location is the cytoplasm. The enzyme catalyses urea + 2 H2O + H(+) = hydrogencarbonate + 2 NH4(+). The protein operates within nitrogen metabolism; urea degradation; CO(2) and NH(3) from urea (urease route): step 1/1. The protein is Urease subunit alpha of Herpetosiphon aurantiacus (strain ATCC 23779 / DSM 785 / 114-95).